A 413-amino-acid polypeptide reads, in one-letter code: Alpha-ketoglutarate-dependent xanthine dioxygenase xan1 (413 aa).

Positions 1 to 18 (MSATATTTVVEPPTTTLT) are enriched in low complexity. The segment at 1 to 24 (MSATATTTVVEPPTTTLTGATEPP) is disordered. Fe cation-binding residues include H183 and D185. Residues T228 and W362 each coordinate 2-oxoglutarate. H377 lines the Fe cation pocket. R389 contributes to the 2-oxoglutarate binding site.

Belongs to the TfdA dioxygenase family. The cofactor is Fe(2+).

It is found in the cytoplasm. It localises to the cytosol. It catalyses the reaction xanthine + 2-oxoglutarate + O2 = urate + succinate + CO2. In terms of biological role, alpha-ketoglutarate-dependent xanthine dioxygenase is a non-heme mononuclear Fe(2+) enzyme that decarboxylates alpha-ketoglutarate to succinate and CO(2) while hydroxylating xanthine to generate uric acid. Allows xanthine utilization as a nitrogen source. This Schizosaccharomyces pombe (strain 972 / ATCC 24843) (Fission yeast) protein is Alpha-ketoglutarate-dependent xanthine dioxygenase xan1 (xan1).